Reading from the N-terminus, the 486-residue chain is Maintenance of mitochondrial morphology protein 1 (486 aa).

Over methionine 1–glycine 20 the chain is Lumenal. The helical transmembrane segment at phenylalanine 21–phenylalanine 41 threads the bilayer. The Cytoplasmic portion of the chain corresponds to glycine 42–asparagine 486. Disordered stretches follow at residues threonine 70–threonine 96, threonine 271–serine 320, and arginine 387–asparagine 486. The span at serine 83 to threonine 96 shows a compositional bias: polar residues. The SMP-LTD domain occupies glutamine 128 to proline 379. Pro residues predominate over residues threonine 271–alanine 282. Residues glutamine 292–serine 306 are compositionally biased toward low complexity. 2 stretches are compositionally biased toward polar residues: residues threonine 398–alanine 407 and aspartate 440–valine 450. Positions methionine 460–histidine 474 are enriched in basic and acidic residues.

The protein belongs to the MMM1 family. In terms of assembly, homodimer. Component of the ER-mitochondria encounter structure (ERMES) or MDM complex, composed of mmm1, mdm10, mdm12 and mdm34. A mmm1 homodimer associates with one molecule of mdm12 on each side in a pairwise head-to-tail manner, and the SMP-LTD domains of mmm1 and mdm12 generate a continuous hydrophobic tunnel for phospholipid trafficking.

The protein resides in the endoplasmic reticulum membrane. In terms of biological role, component of the ERMES/MDM complex, which serves as a molecular tether to connect the endoplasmic reticulum (ER) and mitochondria. Components of this complex are involved in the control of mitochondrial shape and protein biogenesis, and function in nonvesicular lipid trafficking between the ER and mitochondria. The mdm12-mmm1 subcomplex functions in the major beta-barrel assembly pathway that is responsible for biogenesis of all outer membrane beta-barrel proteins, and acts in a late step after the SAM complex. The mdm10-mdm12-mmm1 subcomplex further acts in the TOM40-specific pathway after the action of the mdm12-mmm1 complex. Essential for establishing and maintaining the structure of mitochondria and maintenance of mtDNA nucleoids. The chain is Maintenance of mitochondrial morphology protein 1 from Aspergillus terreus (strain NIH 2624 / FGSC A1156).